Consider the following 421-residue polypeptide: Lipid II:glycine glycyltransferase (421 aa).

The protein belongs to the FemABX family. Monomer.

It is found in the cytoplasm. The catalysed reaction is beta-D-GlcNAc-(1-&gt;4)-Mur2Ac(oyl-L-Ala-D-isoglutaminyl-L-Lys-D-Ala-D-Ala)-di-trans,octa-cis-undecaprenyl diphosphate + glycyl-tRNA(Gly) = beta-D-GlcNAc-(1-&gt;4)-Mur2Ac(oyl-L-Ala-D-isoglutaminyl-L-Lys-(N(6)-Gly)-D-Ala-D-Ala)-di-trans,octa-cis-undecaprenyl diphosphate + tRNA(Gly) + H(+). In terms of biological role, catalyzes the incorporation of the first glycine of the pentaglycine interpeptide bridge, which is characteristic of the S.aureus peptidoglycan. This glycine is added to the epsilon-amino group of the L-lysine of the membrane-bound lipid II intermediate (GlcNAc-(beta-1,4)-N-acetylmuramic acid(-L-Ala-D-iGln-L-Lys-D-Ala-D-Ala)-pyrophosphoryl-undecaprenol), using glycyl-tRNA(Gly) as donor, in a ribosome-independent mechanism. Involved in methicillin resistance. This chain is Lipid II:glycine glycyltransferase (femX), found in Staphylococcus aureus (strain USA300).